The sequence spans 279 residues: Pantothenate synthetase (279 aa).

26-33 provides a ligand contact to ATP; that stretch reads MGNLHDGH. Histidine 33 serves as the catalytic Proton donor. Glutamine 57 contacts (R)-pantoate. Glutamine 57 lines the beta-alanine pocket. 144-147 provides a ligand contact to ATP; it reads GKKD. Residue glutamine 150 coordinates (R)-pantoate. Position 181 to 184 (181 to 184) interacts with ATP; that stretch reads LSSR.

This sequence belongs to the pantothenate synthetase family. Homodimer.

The protein localises to the cytoplasm. It catalyses the reaction (R)-pantoate + beta-alanine + ATP = (R)-pantothenate + AMP + diphosphate + H(+). Its pathway is cofactor biosynthesis; (R)-pantothenate biosynthesis; (R)-pantothenate from (R)-pantoate and beta-alanine: step 1/1. Its function is as follows. Catalyzes the condensation of pantoate with beta-alanine in an ATP-dependent reaction via a pantoyl-adenylate intermediate. The sequence is that of Pantothenate synthetase from Herminiimonas arsenicoxydans.